We begin with the raw amino-acid sequence, 500 residues long: tRNA nucleotidyltransferase cca1 (500 aa).

The segment at 122-139 (DYTNSNSSNKLVFGTPLE) is flexible loop. Positions 231–241 (ERIGVEVDKML) match the ERhxxExxxhh motif motif.

This sequence belongs to the tRNA nucleotidyltransferase/poly(A) polymerase family.

The catalysed reaction is a tRNA precursor + 2 CTP = a tRNA with a 3' CC end + 2 diphosphate. Functionally, tRNA nucleotidyltransferase involved in the synthesis of the tRNA CCA terminus. In contrast to what is usually observed in eukaryotes for which one enzyme synthesizes the whole tRNA CCA terminus, in S.pombe, cca1 specifically adds two cytidine residues to a tRNA substrate lacking this sequence while cca2 specifically adds the terminal adenosine residue thereby completing the CCA sequence. The sequence is that of tRNA nucleotidyltransferase cca1 from Schizosaccharomyces pombe (strain 972 / ATCC 24843) (Fission yeast).